Reading from the N-terminus, the 59-residue chain is Potassium channel toxin alpha-KTx 4.5 (59 aa).

The N-terminal stretch at 1 to 22 (MKAFYGVLIIFILISMLDLSQQ) is a signal peptide. Disulfide bonds link Cys29-Cys50, Cys35-Cys55, and Cys39-Cys57. Positions 48–55 (GKCMNGKC) are interaction with Ca(2+)-activated K(+) channels.

As to expression, expressed by the venom gland.

Its subcellular location is the secreted. Functionally, inhibits with low potency Kv1.1/KCNA1, Kv1.2/KCNA2, Kv1.3/KCNA3 and Kv11.1/KCNH2/ERG1 voltage-gated potassium channels. This is Potassium channel toxin alpha-KTx 4.5 from Tityus costatus (Brazilian scorpion).